The chain runs to 636 residues: Probable potassium transport system protein Kup (636 aa).

12 helical membrane passes run 22-42 (LGLLVAAVGVVYGDIGTSPLY), 64-84 (ILSLILWSLLWVVSFKYVMFI), 115-135 (LMVICGLIGASLFYGDSMITP), 150-170 (FDGIDHWVVPISLVVLVALFL), 182-202 (LFGPIMVTWFVVLGALGVHGI), 220-240 (FFVVHPGMGVAILGAVVLALT), 261-281 (WFILVLPALVLNYFGQGALLL), 293-313 (LLAPSWALLPLVGLATMATVI), 351-371 (IYIGAVNWTLMVGVVLLVIGF), 383-403 (VAVTGTMLMTTILVSAVMLLL), 408-428 (PVLAVPLLMGFLFVDGLFFAA), and 433-453 (IVQGGAFPVLAGGVLFLLMST).

The protein belongs to the HAK/KUP transporter (TC 2.A.72) family.

It localises to the cell inner membrane. It carries out the reaction K(+)(in) + H(+)(in) = K(+)(out) + H(+)(out). Functionally, transport of potassium into the cell. Likely operates as a K(+):H(+) symporter. The chain is Probable potassium transport system protein Kup from Pseudomonas putida (strain GB-1).